Consider the following 475-residue polypeptide: uncharacterized protein (475 aa).

This is an uncharacterized protein from Acheta domesticus (House cricket).